A 151-amino-acid polypeptide reads, in one-letter code: FUN14 domain-containing protein 2 (151 aa).

The Cytoplasmic segment spans residues 1–42; sequence MAANSQGNFDGKFEALDLAELTKKQPWWRKLFGQESGPSAEK. Residues 43 to 63 form a helical membrane-spanning segment; the sequence is YSVATQLVIGGVTGWCTGFVF. The Mitochondrial intermembrane segment spans residues 64 to 69; sequence QKVGKL. Residues 70 to 90 form a helical membrane-spanning segment; sequence AATAVGGGFFLLQLANHTGYI. Over 91 to 126 the chain is Cytoplasmic; that stretch reads KVDWQRVEKDMKKAKEQLKIRKNKQIPTEVKSKAEE. Residues 127–147 form a helical membrane-spanning segment; sequence VVSFVKKNVLVTGGFFGGFLL. Residues 148 to 151 lie on the Mitochondrial intermembrane side of the membrane; it reads GMAS.

This sequence belongs to the FUN14 family. Highly expressed in platelet (at protein level). Expressed in liver, brain, heart and muscle.

It localises to the mitochondrion outer membrane. The protein localises to the nucleus. Functionally, binds directly and specifically 1,2-Diacyl-sn-glycero-3-phospho-(1'-myo-inositol-3',4',5'-bisphosphate) (PIP3) leading to the recruitment of PIP3 to mitochondria and may play a role in the regulation of the platelet activation via AKT/GSK3B/cGMP signaling pathways. May act as transcription factor that regulates SREBP1 (isoform SREBP-1C) expression in order to modulate triglyceride (TG) homeostasis in hepatocytes. This is FUN14 domain-containing protein 2 from Mus musculus (Mouse).